The primary structure comprises 77 residues: MRSLIIVLLFPSIIYSMSIRRCEKTEEETWGLKIGLCIIAKDFYPERTDCSVHLPTASEGLITEGNGFRDIRNTDKL.

The first 17 residues, 1–17 (MRSLIIVLLFPSIIYSM), serve as a signal peptide directing secretion.

Belongs to the chordopoxvirinae B9 protein family.

In Homo sapiens (Human), this protein is Protein OPG195 (OPG197).